The chain runs to 47 residues: Putative beta-neurotoxin (47 aa).

Residues 1-47 form the LCN-type CS-alpha/beta domain; sequence KEGYMGSDGCKMSCVINDQFCDTECQAKLKGSTGYCYFXGLACYXXG. 2 disulfide bridges follow: Cys14–Cys36 and Cys21–Cys43.

As to expression, expressed by the venom gland.

It localises to the secreted. Functionally, causes transient paralysis of the rear legs of and spasms in insects (A.domestica). This Rhopalurus junceus (Caribbean blue scorpion) protein is Putative beta-neurotoxin.